The sequence spans 432 residues: GTPase Obg (432 aa).

Residues 1–158 (MFVDQIKIEV…RKLKLELKVL (158 aa)) enclose the Obg domain. In terms of domain architecture, OBG-type G spans 159 to 335 (ADVGLVGFPS…LTHRTADVLE (177 aa)). Residues 165 to 172 (GFPSVGKS), 190 to 194 (FTTLV), 212 to 215 (DLPG), 282 to 285 (SKMD), and 316 to 318 (SSL) contribute to the GTP site. Mg(2+) is bound by residues Ser-172 and Thr-192. In terms of domain architecture, OCT spans 354 to 432 (TFKEDEPAFK…IEDFTFEFVE (79 aa)).

The protein belongs to the TRAFAC class OBG-HflX-like GTPase superfamily. OBG GTPase family. In terms of assembly, monomer. Mg(2+) is required as a cofactor.

The protein localises to the cytoplasm. Functionally, an essential GTPase which binds GTP, GDP and possibly (p)ppGpp with moderate affinity, with high nucleotide exchange rates and a fairly low GTP hydrolysis rate. Plays a role in control of the cell cycle, stress response, ribosome biogenesis and in those bacteria that undergo differentiation, in morphogenesis control. This Ligilactobacillus salivarius (strain UCC118) (Lactobacillus salivarius) protein is GTPase Obg.